We begin with the raw amino-acid sequence, 196 residues long: Molybdenum cofactor guanylyltransferase (196 aa).

GTP contacts are provided by residues 10 to 12 (LAG), lysine 23, asparagine 51, aspartate 69, and aspartate 99. Aspartate 99 is a binding site for Mg(2+).

This sequence belongs to the MobA family. As to quaternary structure, monomer. The cofactor is Mg(2+).

The protein localises to the cytoplasm. The catalysed reaction is Mo-molybdopterin + GTP + H(+) = Mo-molybdopterin guanine dinucleotide + diphosphate. Transfers a GMP moiety from GTP to Mo-molybdopterin (Mo-MPT) cofactor (Moco or molybdenum cofactor) to form Mo-molybdopterin guanine dinucleotide (Mo-MGD) cofactor. The polypeptide is Molybdenum cofactor guanylyltransferase (Shewanella amazonensis (strain ATCC BAA-1098 / SB2B)).